We begin with the raw amino-acid sequence, 268 residues long: Ribonuclease P protein subunit p30 (268 aa).

Residue Ala-2 is modified to N-acetylalanine. Ser-251 is subject to Phosphoserine.

It belongs to the eukaryotic/archaeal RNase P protein component 3 family. As to quaternary structure, component of nuclear RNase P and RNase MRP ribonucleoproteins. RNase P consists of a catalytic RNA moiety and about 10 protein subunits; POP1, POP4, POP5, POP7, RPP14, RPP21, RPP25, RPP30, RPP38 and RPP40. Within the RNase P complex, POP1, POP7 and RPP25 form the 'finger' subcomplex, POP5, RPP14, RPP40 and homodimeric RPP30 form the 'palm' subcomplex, and RPP21, POP4 and RPP38 form the 'wrist' subcomplex. All subunits of the RNase P complex interact with the catalytic RNA. Several subunits of RNase P are also part of the RNase MRP complex. RNase MRP consists of a catalytic RNA moiety and about 8 protein subunits; POP1, POP7, RPP25, RPP30, RPP38, RPP40 and possibly also POP4 and POP5.

It localises to the nucleus. It is found in the nucleolus. Its function is as follows. Component of ribonuclease P, a ribonucleoprotein complex that generates mature tRNA molecules by cleaving their 5'-ends. Also a component of the MRP ribonuclease complex, which cleaves pre-rRNA sequences. The sequence is that of Ribonuclease P protein subunit p30 (Rpp30) from Mus musculus (Mouse).